Reading from the N-terminus, the 224-residue chain is Glutathione S-transferase U8 (224 aa).

The 81-residue stretch at 5-85 (EHVKLLGLWG…YIEDTWKTTH (81 aa)) folds into the GST N-terminal domain. Glutathione-binding positions include 15-16 (SP), 42-43 (NR), 56-57 (KV), and 69-70 (ES). Residues 91–213 (DPYERAMARF…LPPKEKLVAV (123 aa)) enclose the GST C-terminal domain. Thr-152 bears the Phosphothreonine mark.

The protein belongs to the GST superfamily. Tau family.

The protein localises to the cytoplasm. It localises to the cytosol. It carries out the reaction RX + glutathione = an S-substituted glutathione + a halide anion + H(+). In terms of biological role, may be involved in the conjugation of reduced glutathione to a wide number of exogenous and endogenous hydrophobic electrophiles and have a detoxification role against certain herbicides. In Arabidopsis thaliana (Mouse-ear cress), this protein is Glutathione S-transferase U8 (GSTU8).